A 655-amino-acid chain; its full sequence is p-hydroxybenzoic acid efflux pump subunit AaeB (655 aa).

Topologically, residues 1 to 12 are periplasmic; that stretch reads MDIFSIANQHIR. The helical transmembrane segment at 13-33 threads the bilayer; it reads FAVKLATAIVLALFVGFHFQL. Residues 34-37 lie on the Cytoplasmic side of the membrane; sequence ETPR. The chain crosses the membrane as a helical span at residues 38 to 58; the sequence is WAVLTAAIVAAGPAFAAGGEP. The Periplasmic portion of the chain corresponds to 59–68; that stretch reads YSGAIRYRGF. Residues 69-89 traverse the membrane as a helical segment; the sequence is LRIIGTFIGCIAGLVIIIAMI. The Cytoplasmic portion of the chain corresponds to 90–92; sequence RAP. The helical transmembrane segment at 93-113 threads the bilayer; the sequence is LLMILVCCIWAGFCTWISSLV. The Periplasmic portion of the chain corresponds to 114 to 120; it reads RIENSYA. Residues 121-141 form a helical membrane-spanning segment; that stretch reads WGLAGYTALIIVITIQPEPLL. The Cytoplasmic portion of the chain corresponds to 142–151; the sequence is TPQFAVERCS. A helical membrane pass occupies residues 152-172; that stretch reads EIVIGIVCAIMADLLFSPRSI. The Periplasmic portion of the chain corresponds to 173 to 369; that stretch reads KQEVDRELES…RTTLSCILGT (197 aa). Residues 370–390 form a helical membrane-spanning segment; that stretch reads LFWLWTGWTSGSGAMVMIAVV. Topologically, residues 391–406 are cytoplasmic; that stretch reads TSLAMRLPNPRMVAID. A helical membrane pass occupies residues 407–427; sequence FIYGTLAALPLGLLYFLVIIP. Residues 428-430 are Periplasmic-facing; it reads NTQ. A helical membrane pass occupies residues 431–451; sequence QSMLLLCISLAVLGFFLGIEV. The Cytoplasmic portion of the chain corresponds to 452 to 458; it reads QKRRLGS. Residues 459 to 479 form a helical membrane-spanning segment; that stretch reads MGALASTINIIVLDNPMTFHF. Residues 480 to 481 are Periplasmic-facing; the sequence is SQ. A helical membrane pass occupies residues 482 to 502; that stretch reads FLDSALGQIVGCVLAFTVILL. Residues 503-655 lie on the Cytoplasmic side of the membrane; sequence VRDKSRDRTG…HKYQHALTDS (153 aa).

It belongs to the aromatic acid exporter ArAE (TC 2.A.85) family.

The protein resides in the cell inner membrane. Functionally, forms an efflux pump with AaeA. Could function as a metabolic relief valve, allowing to eliminate certain compounds when they accumulate to high levels in the cell. In Escherichia coli O157:H7, this protein is p-hydroxybenzoic acid efflux pump subunit AaeB.